We begin with the raw amino-acid sequence, 326 residues long: GTP 3',8-cyclase (326 aa).

One can recognise a Radical SAM core domain in the interval 7–232 (GFGRSFPYLR…PRAADAGPAR (226 aa)). Arginine 16 contributes to the GTP binding site. [4Fe-4S] cluster contacts are provided by cysteine 23 and cysteine 27. Tyrosine 29 is a binding site for S-adenosyl-L-methionine. Cysteine 30 serves as a coordination point for [4Fe-4S] cluster. Arginine 65 provides a ligand contact to GTP. Glycine 69 is an S-adenosyl-L-methionine binding site. Threonine 96 is a GTP binding site. Serine 120 contributes to the S-adenosyl-L-methionine binding site. A GTP-binding site is contributed by lysine 157. Methionine 191 provides a ligand contact to S-adenosyl-L-methionine. 2 residues coordinate [4Fe-4S] cluster: cysteine 254 and cysteine 257. Position 259–261 (259–261 (RLR)) interacts with GTP. A [4Fe-4S] cluster-binding site is contributed by cysteine 271.

This sequence belongs to the radical SAM superfamily. MoaA family. In terms of assembly, monomer and homodimer. [4Fe-4S] cluster is required as a cofactor.

The catalysed reaction is GTP + AH2 + S-adenosyl-L-methionine = (8S)-3',8-cyclo-7,8-dihydroguanosine 5'-triphosphate + 5'-deoxyadenosine + L-methionine + A + H(+). It functions in the pathway cofactor biosynthesis; molybdopterin biosynthesis. Functionally, catalyzes the cyclization of GTP to (8S)-3',8-cyclo-7,8-dihydroguanosine 5'-triphosphate. The chain is GTP 3',8-cyclase from Stenotrophomonas maltophilia (strain R551-3).